Consider the following 222-residue polypeptide: ER membrane protein complex subunit 7 homolog (222 aa).

The signal sequence occupies residues 1–16; it reads MKSILLLFSLIVLGSA. The Extracellular segment spans residues 17 to 145; the sequence is TEEVSRTEQT…RKREEWRITD (129 aa). The helical transmembrane segment at 146-166 threads the bilayer; that stretch reads MLFSPMVLMLVVPLVVMLILP. The Cytoplasmic portion of the chain corresponds to 167–222; that stretch reads KMTANDPELKKEMENMQMPKVDMPDVGEMMANFFGGSAPAKKKAVTGGSGSGQRRK.

This sequence belongs to the EMC7 family.

The protein resides in the membrane. This Caenorhabditis elegans protein is ER membrane protein complex subunit 7 homolog.